The following is a 942-amino-acid chain: Probable serine/threonine-protein kinase DDB_G0279719 (942 aa).

The 614-residue stretch at 4 to 617 (YEVVKLIGVG…IDLILQNKLF (614 aa)) folds into the Protein kinase domain. Residues 10 to 18 (IGVGGEAKA) and K33 contribute to the ATP site. 4 disordered regions span residues 109–170 (NNNQ…INNN), 247–303 (SFSN…NGNT), 352–371 (QPPQ…GADV), and 408–445 (NDPS…LNIN). The segment covering 258 to 272 (NSNDSNLHQSSSNSS) has biased composition (low complexity). The span at 288–303 (SPGTSTPYQKGSNGNT) shows a compositional bias: polar residues. Low complexity-rich tracts occupy residues 353–367 (PPQS…SSPT) and 410–432 (PSSH…PQSP). The active-site Proton acceptor is the D487. The disordered stretch occupies residues 642-686 (TNSKSNSSNNLNNSNSNNDIINNNNNNNSSNNINNNNIVNLNNSY). A coiled-coil region spans residues 675 to 703 (NNNNIVNLNNSYNNKQDKCEQRNKSLNQN).

It belongs to the protein kinase superfamily. Ser/Thr protein kinase family.

It catalyses the reaction L-seryl-[protein] + ATP = O-phospho-L-seryl-[protein] + ADP + H(+). The catalysed reaction is L-threonyl-[protein] + ATP = O-phospho-L-threonyl-[protein] + ADP + H(+). The polypeptide is Probable serine/threonine-protein kinase DDB_G0279719 (Dictyostelium discoideum (Social amoeba)).